The chain runs to 283 residues: MAEITASLVKELRERTGAGMMDCKKALTEANGDIELAIENMRKSGAIKAAKKAGNVAADGVIKTKIDGNVAFILEVNCQTDFVAKDAGFQAFADKVLDAAVAGKITDVEVLKAQFEEERVALVAKIGENINIRRVASLEGDVLGSYQHGARIGVLVAAKGADEELVKQLAMHVAASKPEFVKPEDVSADVVEKEYQVQLDIAMQSGKPKEIAEKMVEGRMKKFTGEVSLTGQPFVMEPSKSVGQLLKEHNADVTGFIRFEVGEGIEKVETDFAAEVAAMSKQS.

An involved in Mg(2+) ion dislocation from EF-Tu region spans residues 80–83 (TDFV).

Belongs to the EF-Ts family.

The protein localises to the cytoplasm. Its function is as follows. Associates with the EF-Tu.GDP complex and induces the exchange of GDP to GTP. It remains bound to the aminoacyl-tRNA.EF-Tu.GTP complex up to the GTP hydrolysis stage on the ribosome. This is Elongation factor Ts from Salmonella choleraesuis (strain SC-B67).